A 212-amino-acid chain; its full sequence is Disintegrin-like halysetin (212 aa).

The Disintegrin domain occupies 4–90 (PPVCGNELLE…ECPADVFHKN (87 aa)). 9 disulfides stabilise this stretch: cysteine 7–cysteine 26, cysteine 18–cysteine 36, cysteine 62–cysteine 82, cysteine 69–cysteine 94, cysteine 101–cysteine 106, cysteine 113–cysteine 128, cysteine 151–cysteine 158, cysteine 163–cysteine 174, and cysteine 200–cysteine 205. The D/ECD-tripeptide signature appears at 68–70 (ECD).

It belongs to the venom metalloproteinase (M12B) family. P-III subfamily. P-IIIb sub-subfamily. In terms of assembly, monomer. Expressed by the venom gland.

Its subcellular location is the secreted. Functionally, inhibits human platelet aggregation stimulated by collagen with an IC(50) of 420 nM. This is Disintegrin-like halysetin from Gloydius halys (Chinese water mocassin).